Consider the following 436-residue polypeptide: MTTFSPREIVSELDRYIVGQHEAKRAVAIALRNRWRRQQLEPDLRDEVMPKNILMIGPTGVGKTEISRRLAKLAGAPFIKVEATKFTEVGYVGRDVEQIIRDLVEVGIGLVREKKRAEVQAKAHMSAEERVLDALVGATASPATRDSFRKKLRDGQLDDKEIDIEVADTGSGMPGGFEIPGMPGANIGVLNLSEMFGKAMGGRTKKVRTTVKDSYKELVRDESDKLIDNEAIQREAVRSAEDDGIVFLDEIDKIAARDGGMGAGVSREGVQRDLLPLVEGTTVSTKYGPVKTDHILFIASGAFHVSKPSDLLPELQGRLPIRVELRPLTKEDFRRILTEPEASLIRQYKALMETEDLKLDFTDDAIDALADVAVHLNSTVENIGARRLQTVMERVLDEISYNASDRAGVSVTIDAAYVREHVGDLANNTDLSRFIL.

ATP-binding positions include V18, 60–65 (GVGKTE), D249, E314, and R386.

It belongs to the ClpX chaperone family. HslU subfamily. As to quaternary structure, a double ring-shaped homohexamer of HslV is capped on each side by a ring-shaped HslU homohexamer. The assembly of the HslU/HslV complex is dependent on binding of ATP.

The protein resides in the cytoplasm. Its function is as follows. ATPase subunit of a proteasome-like degradation complex; this subunit has chaperone activity. The binding of ATP and its subsequent hydrolysis by HslU are essential for unfolding of protein substrates subsequently hydrolyzed by HslV. HslU recognizes the N-terminal part of its protein substrates and unfolds these before they are guided to HslV for hydrolysis. The polypeptide is ATP-dependent protease ATPase subunit HslU (Rhizobium rhizogenes (strain K84 / ATCC BAA-868) (Agrobacterium radiobacter)).